The sequence spans 209 residues: Hyperpolarization-activated voltage-gated potassium channel (209 aa).

Over 1 to 10 (MNLKDRRLKK) the chain is Cytoplasmic. The chain crosses the membrane as a helical span at residues 11-31 (IMEVLSLIFTFEIVASFILST). The Extracellular portion of the chain corresponds to 32 to 38 (YNPPYQD). The chain crosses the membrane as a helical span at residues 39 to 59 (LLIKLDYISIMFFTFEFIYNF). The Cytoplasmic segment spans residues 60-71 (YYVEDKAKFFKD). Residues 72 to 92 (IYNIVDAIVVIAFLLYSLQVF) traverse the membrane as a helical segment. The Extracellular portion of the chain corresponds to 93–96 (YSKA). The chain crosses the membrane as a helical; Voltage-sensor span at residues 97–117 (FLGLRVINLLRILVLLRIIKL). The Cytoplasmic portion of the chain corresponds to 118 to 125 (RKLEENQA). A helical membrane pass occupies residues 126–146 (LINFLTLLTICFIASCLIWIV). Residues 147 to 181 (ESGVNPAINNFFDAFYFTTISITTVGYGDITPKTD) are Extracellular-facing. The Selectivity filter signature appears at 170-175 (TVGYGD). A helical membrane pass occupies residues 182–202 (AGKLIIIFSVLFFISGLITSL). At 203–209 (QKALKGD) the chain is on the cytoplasmic side.

Belongs to the potassium channel family. As to quaternary structure, homotetramer.

The protein resides in the cell membrane. Voltage-gated potassium-selective channel opened by hyperpolarization. This Methanocaldococcus jannaschii (strain ATCC 43067 / DSM 2661 / JAL-1 / JCM 10045 / NBRC 100440) (Methanococcus jannaschii) protein is Hyperpolarization-activated voltage-gated potassium channel (mvp).